We begin with the raw amino-acid sequence, 194 residues long: MPPPAWGWGSNPLEPVVHTVAAFSRRLLIAPDAAPDEARLRPLLSLSLSPPPTPPSPPPPPPEVLKKDSKAAPLTKEEVGRATWMLLHTIAAQFPDEPTRQQRRDARELMAIISRLYPCKECAEHFKEVLKANPVQAGSQAEFSQWLCYVHNVVNRSLGKPIFPCQRVNARWGKLDCPERSCDLEGSNDIIPNR.

A disordered region spans residues 44–72; the sequence is LSLSLSPPPTPPSPPPPPPEVLKKDSKAA. Residues 49 to 63 are compositionally biased toward pro residues; the sequence is SPPPTPPSPPPPPPE. The region spanning 72-172 is the ERV/ALR sulfhydryl oxidase domain; sequence APLTKEEVGR…FPCQRVNARW (101 aa). Positions 76, 81, 84, 121, 125, 148, 151, 152, 155, 160, and 171 each coordinate FAD. Cysteines 119 and 122 form a disulfide. A disulfide bridge connects residues Cys-148 and Cys-165. An intrachain disulfide couples Cys-177 to Cys-182. The Required for dimerization and substrate specificity motif lies at 177 to 182; it reads CPERSC.

As to quaternary structure, homodimer. The cofactor is FAD. Post-translationally, contains three disulfide bonds; one catalytic disulfide (Cys-119 to Cys-122), one structural disulfide (Cys-148 to Cys-165), and one shuttle disulfide (Cys-177 to Cys-182).

The protein resides in the mitochondrion. It carries out the reaction 2 R'C(R)SH + O2 = R'C(R)S-S(R)CR' + H2O2. In terms of biological role, FAD-dependent sulfhydryl oxidase that catalyzes disulfide bond formation. Oxidizes thioredoxin in vitro. Required for the import and folding of small cysteine-containing proteins in the mitochondrial intermembrane space, and can act independently of the oxidoreductase MIA40. Can oxidize the cytochrome c oxidase assembly protein COX19, a typical substrate of MIA40. This chain is FAD-linked sulfhydryl oxidase ERV1, found in Oryza sativa subsp. japonica (Rice).